We begin with the raw amino-acid sequence, 439 residues long: tRNA-2-methylthio-N(6)-dimethylallyladenosine synthase (439 aa).

The region spanning 2-119 is the MTTase N-terminal domain; sequence KYIYIKTWGC…LAQMIDKVEK (118 aa). Residues Cys-11, Cys-48, Cys-82, Cys-156, Cys-160, and Cys-163 each coordinate [4Fe-4S] cluster. Residues 142–374 enclose the Radical SAM core domain; the sequence is KKTGYTASIS…QNCINKQTMS (233 aa). Residues 377 to 439 form the TRAM domain; sequence RKMLKSTQSV…HTHSLQGELI (63 aa).

This sequence belongs to the methylthiotransferase family. MiaB subfamily. As to quaternary structure, monomer. Requires [4Fe-4S] cluster as cofactor.

Its subcellular location is the cytoplasm. It catalyses the reaction N(6)-dimethylallyladenosine(37) in tRNA + (sulfur carrier)-SH + AH2 + 2 S-adenosyl-L-methionine = 2-methylsulfanyl-N(6)-dimethylallyladenosine(37) in tRNA + (sulfur carrier)-H + 5'-deoxyadenosine + L-methionine + A + S-adenosyl-L-homocysteine + 2 H(+). In terms of biological role, catalyzes the methylthiolation of N6-(dimethylallyl)adenosine (i(6)A), leading to the formation of 2-methylthio-N6-(dimethylallyl)adenosine (ms(2)i(6)A) at position 37 in tRNAs that read codons beginning with uridine. The chain is tRNA-2-methylthio-N(6)-dimethylallyladenosine synthase from Buchnera aphidicola subsp. Schizaphis graminum (strain Sg).